The chain runs to 691 residues: Elongation factor G (691 aa).

In terms of domain architecture, tr-type G spans 8 to 282 (EKTRNIGIMA…AVVDYLPSPV (275 aa)). GTP contacts are provided by residues 17-24 (AHIDAGKT), 81-85 (DTPGH), and 135-138 (NKMD).

It belongs to the TRAFAC class translation factor GTPase superfamily. Classic translation factor GTPase family. EF-G/EF-2 subfamily.

It is found in the cytoplasm. Catalyzes the GTP-dependent ribosomal translocation step during translation elongation. During this step, the ribosome changes from the pre-translocational (PRE) to the post-translocational (POST) state as the newly formed A-site-bound peptidyl-tRNA and P-site-bound deacylated tRNA move to the P and E sites, respectively. Catalyzes the coordinated movement of the two tRNA molecules, the mRNA and conformational changes in the ribosome. This chain is Elongation factor G, found in Caldicellulosiruptor bescii (strain ATCC BAA-1888 / DSM 6725 / KCTC 15123 / Z-1320) (Anaerocellum thermophilum).